A 297-amino-acid chain; its full sequence is 4-hydroxy-tetrahydrodipicolinate synthase (297 aa).

Pyruvate is bound at residue Thr-55. Residue Tyr-144 is the Proton donor/acceptor of the active site. Lys-172 functions as the Schiff-base intermediate with substrate in the catalytic mechanism. Pyruvate is bound at residue Ile-213.

The protein belongs to the DapA family. In terms of assembly, homotetramer; dimer of dimers.

The protein localises to the cytoplasm. It carries out the reaction L-aspartate 4-semialdehyde + pyruvate = (2S,4S)-4-hydroxy-2,3,4,5-tetrahydrodipicolinate + H2O + H(+). Its pathway is amino-acid biosynthesis; L-lysine biosynthesis via DAP pathway; (S)-tetrahydrodipicolinate from L-aspartate: step 3/4. Catalyzes the condensation of (S)-aspartate-beta-semialdehyde [(S)-ASA] and pyruvate to 4-hydroxy-tetrahydrodipicolinate (HTPA). This Lactococcus lactis subsp. lactis (strain IL1403) (Streptococcus lactis) protein is 4-hydroxy-tetrahydrodipicolinate synthase.